A 1603-amino-acid polypeptide reads, in one-letter code: Vitellogenin-5 (1603 aa).

Residues 1–15 (MKSIIIASLVALAIA) form the signal peptide. The 662-residue stretch at 24-685 (FSPKSEYVYK…EKNAFLPKEV (662 aa)) folds into the Vitellogenin domain. The 170-residue stretch at 1306–1475 (ATCKVDQSEV…SYLLKNEECE (170 aa)) folds into the VWFD domain. 2 disulfides stabilise this stretch: Cys-1308/Cys-1438 and Cys-1330/Cys-1474. The disordered stretch occupies residues 1492–1513 (NREEKKSDYESSSDYESNYDEK).

Vitellogenin 5 undergoes little if any processing before being packaged into yolk platelets. Expressed in the intestine of adult hermaphrodites.

The protein resides in the secreted. In terms of biological role, precursor of the egg-yolk proteins that are sources of nutrients during embryonic development. Together with other vitellogenins, may play a role in modulating life-span, acting via induction of autophagy and lysosomal lipolysis. This Caenorhabditis elegans protein is Vitellogenin-5 (vit-5).